The sequence spans 226 residues: 3-dehydroquinate dehydratase (226 aa).

3-dehydroquinate contacts are provided by residues serine 9, 32-34, and arginine 59; that span reads EVR. Histidine 119 (proton donor/acceptor) is an active-site residue. Lysine 146 acts as the Schiff-base intermediate with substrate in catalysis. The 3-dehydroquinate site is built by arginine 187, threonine 208, and glutamine 212.

Belongs to the type-I 3-dehydroquinase family. Homodimer.

The enzyme catalyses 3-dehydroquinate = 3-dehydroshikimate + H2O. Its pathway is metabolic intermediate biosynthesis; chorismate biosynthesis; chorismate from D-erythrose 4-phosphate and phosphoenolpyruvate: step 3/7. Involved in the third step of the chorismate pathway, which leads to the biosynthesis of aromatic amino acids. Catalyzes the cis-dehydration of 3-dehydroquinate (DHQ) and introduces the first double bond of the aromatic ring to yield 3-dehydroshikimate. In Desulfotalea psychrophila (strain LSv54 / DSM 12343), this protein is 3-dehydroquinate dehydratase.